Consider the following 626-residue polypeptide: 5'-AMP-activated protein kinase catalytic subunit alpha-2 (626 aa).

The segment covering 1-24 has biased composition (basic and acidic residues); sequence MFSHQDRDRDRKEDGGGDGTEMKS. The segment at 1 to 77 is disordered; sequence MFSHQDRDRD…GETSTKQQQE (77 aa). The segment covering 38-49 has biased composition (basic residues); it reads NLSRKLSAKSRK. Residues 58-77 show a composition bias toward polar residues; it reads DNSSKMSSPGGETSTKQQQE. Residues 87–339 form the Protein kinase domain; the sequence is YILKETLGVG…IKDVIAHEWF (253 aa). ATP is bound by residues 93–101 and K116; that span reads LGVGTFGKV. D210 (proton acceptor) is an active-site residue. T243 is modified (phosphothreonine; by par-4). The segment at 541 to 568 is disordered; the sequence is SGSASASSSRHASMSMPQKPAGIRGTRT. Residues 542 to 555 are compositionally biased toward low complexity; sequence GSASASSSRHASMS.

Belongs to the protein kinase superfamily. CAMK Ser/Thr protein kinase family. SNF1 subfamily. Tetramer, composed of 2 regulatory (R) and 2 catalytic (C) subunits. In the presence of cAMP it dissociates into 2 active monomeric C subunits and an R dimer that binds four cAMP molecules. Post-translationally, phosphorylated on Thr-243 in response to oxidative stress and during dauer development. Phosphorylation at Thr-243 is increased in response to sodium azide or the AMP analog AICAR (5-amino-1-(5-phospho-beta-D-ribosyl)imidazole-4-carboxamide). As to expression, expressed in the pharynx, the ventral cord, neurons including the hermaphrodite-specific neuron, body wall muscles, the vulva, the excretory canal, and weakly in the intestine.

It catalyses the reaction L-seryl-[protein] + ATP = O-phospho-L-seryl-[protein] + ADP + H(+). It carries out the reaction L-threonyl-[protein] + ATP = O-phospho-L-threonyl-[protein] + ADP + H(+). Its activity is regulated as follows. Activated by phosphorylation. In terms of biological role, acts as a sensor that couples lifespan to information about energy levels and insulin-like signals. Role in motility and response to oxidative stress. Involved in the establishment of germline stem cell (GSC) quiescence during dauer development. Plays a role in axon regrowth after axotomy in PLM neurons. Plays a role in the maintenance of glycogen stores which are necessary for resistance to hyperosmotic stress. Plays a role in the regulation of flp-7 secretion from ASI neurons. Keeps the CREB-regulated transcription coactivator 1 homolog crtc-1 inactive which in turn inhibits flp-7 secretion. Following serotonin signaling, derepresses crtc-1 which stimulates flp-7 secretion and subsequent body fat loss. This Caenorhabditis elegans protein is 5'-AMP-activated protein kinase catalytic subunit alpha-2.